Reading from the N-terminus, the 62-residue chain is MTIIVQLLVFILVIFSTLLVVGIPVTFASPGQWEKSKNLIYTGAGIWTGLVLITGLVNSFIN.

2 consecutive transmembrane segments (helical) span residues 8–28 (LVFI…VTFA) and 41–61 (YTGA…NSFI).

Belongs to the PsbZ family. In terms of assembly, PSII is composed of 1 copy each of membrane proteins PsbA, PsbB, PsbC, PsbD, PsbE, PsbF, PsbH, PsbI, PsbJ, PsbK, PsbL, PsbM, PsbT, sbX, PsbY, PsbZ, Psb30/Ycf12, at least 3 peripheral proteins of the oxygen-evolving complex and a large number of cofactors. It forms dimeric complexes.

The protein resides in the plastid. The protein localises to the chloroplast thylakoid membrane. Functionally, may control the interaction of photosystem II (PSII) cores with the light-harvesting antenna, regulates electron flow through the 2 photosystem reaction centers. PSII is a light-driven water plastoquinone oxidoreductase, using light energy to abstract electrons from H(2)O, generating a proton gradient subsequently used for ATP formation. The chain is Photosystem II reaction center protein Z from Gracilaria tenuistipitata var. liui (Red alga).